Here is a 448-residue protein sequence, read N- to C-terminus: tRNA modification GTPase MnmE (448 aa).

3 residues coordinate (6S)-5-formyl-5,6,7,8-tetrahydrofolate: Arg-24, Glu-81, and Lys-120. In terms of domain architecture, TrmE-type G spans 216-373 (GLNVVLVGAP…LKRTLLREAG (158 aa)). Asn-226 contacts K(+). Residues 226–231 (NVGKSS), 245–251 (TDIAGTT), and 270–273 (DTAG) contribute to the GTP site. Ser-230 contributes to the Mg(2+) binding site. The K(+) site is built by Thr-245, Ile-247, and Thr-250. Residue Thr-251 coordinates Mg(2+). Lys-448 lines the (6S)-5-formyl-5,6,7,8-tetrahydrofolate pocket.

Belongs to the TRAFAC class TrmE-Era-EngA-EngB-Septin-like GTPase superfamily. TrmE GTPase family. As to quaternary structure, homodimer. Heterotetramer of two MnmE and two MnmG subunits. K(+) serves as cofactor.

The protein resides in the cytoplasm. Functionally, exhibits a very high intrinsic GTPase hydrolysis rate. Involved in the addition of a carboxymethylaminomethyl (cmnm) group at the wobble position (U34) of certain tRNAs, forming tRNA-cmnm(5)s(2)U34. This is tRNA modification GTPase MnmE from Neisseria meningitidis serogroup C / serotype 2a (strain ATCC 700532 / DSM 15464 / FAM18).